The sequence spans 253 residues: Ubiquinone biosynthesis O-methyltransferase (253 aa).

Residues R41, G72, D93, and L136 each contribute to the S-adenosyl-L-methionine site.

Belongs to the methyltransferase superfamily. UbiG/COQ3 family.

The enzyme catalyses a 3-demethylubiquinol + S-adenosyl-L-methionine = a ubiquinol + S-adenosyl-L-homocysteine + H(+). It catalyses the reaction a 3-(all-trans-polyprenyl)benzene-1,2-diol + S-adenosyl-L-methionine = a 2-methoxy-6-(all-trans-polyprenyl)phenol + S-adenosyl-L-homocysteine + H(+). The protein operates within cofactor biosynthesis; ubiquinone biosynthesis. O-methyltransferase that catalyzes the 2 O-methylation steps in the ubiquinone biosynthetic pathway. This chain is Ubiquinone biosynthesis O-methyltransferase, found in Azorhizobium caulinodans (strain ATCC 43989 / DSM 5975 / JCM 20966 / LMG 6465 / NBRC 14845 / NCIMB 13405 / ORS 571).